Here is an 804-residue protein sequence, read N- to C-terminus: Phenylalanine--tRNA ligase beta subunit (804 aa).

One can recognise a tRNA-binding domain in the interval 38 to 148 (RAAFRAFTIA…ENAPVGTSFA (111 aa)). In terms of domain architecture, B5 spans 401-476 (HTARVIDFPV…RIHGINRIDP (76 aa)). Mg(2+) contacts are provided by Asp-454, Asp-460, Glu-463, and Glu-464. Residues 710–803 (SLFQSLKRDY…VAKQTGGVLR (94 aa)) form the FDX-ACB domain.

It belongs to the phenylalanyl-tRNA synthetase beta subunit family. Type 1 subfamily. Tetramer of two alpha and two beta subunits. It depends on Mg(2+) as a cofactor.

It localises to the cytoplasm. The enzyme catalyses tRNA(Phe) + L-phenylalanine + ATP = L-phenylalanyl-tRNA(Phe) + AMP + diphosphate + H(+). The polypeptide is Phenylalanine--tRNA ligase beta subunit (Brucella abortus (strain 2308)).